The primary structure comprises 147 residues: Globin (147 aa).

Residues 1–147 form the Globin domain; sequence GLSAEQKTAL…LLGVLIENHQ (147 aa). H66 and H98 together coordinate heme b.

It belongs to the globin family. As to quaternary structure, homodimer.

The protein is Globin of Tritia mutabilis (Sea snail).